The primary structure comprises 565 residues: MNIFKRISSLILSKLDKLKQGVSSVTNFIVEPPSNRAHGDIYTNIAMVLAKHEKKKPVEIAEVLAKEFALFDEIARVEIAGPGFINMHLKIEVWHGILEQINELKTEFGTLNIGNNQAINVEFVSANPTGPLHIGHARGAVFGDVLTNLLKKVGYRVTKEYYINDAGAQIDTLVRSVYLRYKEALGEKISIEKGLYPGEYLKPIGEELAKKYGRELLEKQDNRVIREYTLSSILELIKEGMNLLGVSHDVFTSEYELQKSGKIEKSIKLLSDKGLVYEGYLEKPKSKESENWTSRKEMLFRSTEFGDDVDRALKKEDGSWTYFASDIAYHFDKISRGFNNMIVALGSDHGGYIKRLKAVISALSDNQAKIEVKLHNVVNFFENGKPVKMSKRSGNFLTVRDVVEEVGRDITRFIMLTRKNDMVLDFDFTKVKEQSKDNPIFYVQYAHVRAHSLMRNAPKELPKANPSLLKTNGELFLIKTLAKWPDVVETAARLCEPHRITFYLLEVAEAFHILWGYGKSDLNMRFILEDNPNLTAARMFLVQALVHVIASGLSMFNIEPLEEMK.

Residues 126 to 136 (ANPTGPLHIGH) carry the 'HIGH' region motif.

This sequence belongs to the class-I aminoacyl-tRNA synthetase family. Monomer.

It localises to the cytoplasm. It carries out the reaction tRNA(Arg) + L-arginine + ATP = L-arginyl-tRNA(Arg) + AMP + diphosphate. The polypeptide is Arginine--tRNA ligase (Wolbachia sp. subsp. Brugia malayi (strain TRS)).